Here is a 211-residue protein sequence, read N- to C-terminus: Troponin I, cardiac muscle (211 aa).

The interval 1–23 is disordered; that stretch reads MADESGDAAGCPPPAPAPIRRQS. The residue at position 2 (alanine 2) is an N-acetylalanine. A Phosphoserine modification is found at serine 5. 2 positions are modified to phosphoserine; by PKA and PKD/PRKD1: serine 23 and serine 24. Phosphotyrosine is present on tyrosine 27. The residue at position 32 (threonine 32) is a Phosphothreonine; by STK4/MST1. The interval 33 to 80 is involved in binding TNC; the sequence is EPHAKKKSKISASRKLQLKTLMLQIAKQELEREAEERRGEKGRALSTR. Phosphoserine; by PKC/PRKCE occurs at positions 43 and 45. Threonine 52 bears the Phosphothreonine; by STK4/MST1 mark. Residue serine 78 is modified to Phosphoserine. Threonine 79 is subject to Phosphothreonine. Phosphothreonine; by STK4/MST1 is present on residues threonine 130 and threonine 144. The interval 130–150 is involved in binding TNC and actin; the sequence is TQKIFDLRGKFKRPTLRRVRI. The residue at position 151 (serine 151) is a Phosphoserine; by PAK3. Phosphoserine is present on serine 167. Threonine 182 is subject to Phosphothreonine. Serine 200 is subject to Phosphoserine.

This sequence belongs to the troponin I family. Binds to actin and tropomyosin. Interacts with TRIM63. Interacts with STK4/MST1. In terms of processing, phosphorylated at Ser-23 and Ser-24 by PRKD1; phosphorylation reduces myofilament calcium sensitivity. Phosphorylated preferentially at Thr-32. Phosphorylation by STK4/MST1 alters its binding affinity to TNNC1 (cardiac Tn-C) and TNNT2 (cardiac Tn-T). Phosphorylated at Ser-43 and Ser-45 by PRKCE; phosphorylation increases myocardium contractile dysfunction.

Functionally, troponin I is the inhibitory subunit of troponin, the thin filament regulatory complex which confers calcium-sensitivity to striated muscle actomyosin ATPase activity. This Canis lupus familiaris (Dog) protein is Troponin I, cardiac muscle (TNNI3).